Consider the following 1580-residue polypeptide: Endoribonuclease Dicer homolog 3 (1580 aa).

Residues 1–12 (MHSSLEPEKMEE) show a composition bias toward basic and acidic residues. The segment at 1–22 (MHSSLEPEKMEEGGGSNSLKRK) is disordered. Residues 51–223 (VYEVAKNRNI…SPSNYAAQVS (173 aa)) form the Helicase ATP-binding domain. ATP is bound at residue 64–71 (LGTGIDKS). Residues 170 to 173 (DECH) carry the DECH box motif. The Helicase C-terminal domain occupies 394-562 (KLKELFHLLD…SCPPPVKNGH (169 aa)). Polar residues predominate over residues 581-597 (EEAASTQTMSDPPSRNE). Disordered regions lie at residues 581-601 (EEAA…QLPP) and 613-638 (QSNG…KKRK). Low complexity predominate over residues 622–633 (SSKSKSSSSAAG). The region spanning 836 to 960 (NLIHFANASS…LPPELLARID (125 aa)) is the PAZ domain. RNase III domains follow at residues 985-1157 (ASQL…VSGG) and 1198-1340 (LIEL…IDTR). E1234, D1326, and E1329 together coordinate Mg(2+).

The protein belongs to the helicase family. Dicer subfamily. In terms of assembly, interacts with DRB2 and DRB5. Requires Mg(2+) as cofactor. The cofactor is Mn(2+).

It is found in the nucleus. It localises to the nucleolus. In terms of biological role, ribonuclease (RNase) III involved in RNA-mediated post-transcriptional gene silencing (PTGS). Involved in the processing of repeat-associated small interfering RNAs (ra-siRNAs, derived from heterochromatin and DNA repeats such as transposons) by cleaving small dsRNAs into 24 nucleotide ra-siRNAs. Plays a role in antiviral RNA silencing. Involved in the production of viral siRNAs derived from the cabbage leaf curl virus (CaLCuV) and tobacco rattle virus (TRV). Targeted by the viral silencing suppressor (VSR) protein 2b of the cucumber mosaic virus (CMV) that inactivates DCL3 function in RNA silencing. Acts redundantly with DICER-LIKE 1 (DCL1) to promote flowering via repression of FLOWERING LOCUS C (FLC). Does not seem to be involved in microRNAs (miRNAs) processing. The polypeptide is Endoribonuclease Dicer homolog 3 (DCL3) (Arabidopsis thaliana (Mouse-ear cress)).